The sequence spans 457 residues: Phosphomethylpyrimidine synthase (457 aa).

Residues N88, M117, Y146, H182, 204-206 (SRG), 245-248 (DACR), and E284 each bind substrate. H288 contacts Zn(2+). Residue Y311 coordinates substrate. A Zn(2+)-binding site is contributed by H352. Residues C428, C431, and C435 each contribute to the [4Fe-4S] cluster site.

It belongs to the ThiC family. Requires [4Fe-4S] cluster as cofactor.

It catalyses the reaction 5-amino-1-(5-phospho-beta-D-ribosyl)imidazole + S-adenosyl-L-methionine = 4-amino-2-methyl-5-(phosphooxymethyl)pyrimidine + CO + 5'-deoxyadenosine + formate + L-methionine + 3 H(+). Its pathway is cofactor biosynthesis; thiamine diphosphate biosynthesis. Its function is as follows. Catalyzes the synthesis of the hydroxymethylpyrimidine phosphate (HMP-P) moiety of thiamine from aminoimidazole ribotide (AIR) in a radical S-adenosyl-L-methionine (SAM)-dependent reaction. This Clostridium tetani (strain Massachusetts / E88) protein is Phosphomethylpyrimidine synthase.